We begin with the raw amino-acid sequence, 486 residues long: F-box protein At1g80960 (486 aa).

The F-box domain maps to V49–R97.

The chain is F-box protein At1g80960 from Arabidopsis thaliana (Mouse-ear cress).